Here is a 650-residue protein sequence, read N- to C-terminus: MATKIRILPENLTNKIAAGEVVERPASVAKELVENALDAGSKEVVVEIESGGRRLIKVSDTGCGMSRDDALLALERHATSKIATDEDLFSLCTLGFRGEALPSVASVSRLTISTRTSDSVEGTEIYAEGGRIKEVKECGMAVGTVISVRNLFFNTPARLKFMKSAETEGGHVGELLTRLAISRPEVRFTYKNDGKVMFRALDADLKERVATMLGRSISSFLYPVSYQEGGLKVSGLVAAPECSRSAGSHLYTYINGRFIKDKVVQHAILQAYRNFLERGRYPVVAVFIDIAPGEVDVNVHPTKHEVRFREQGRVHDAIQKAVESVLKETPWLKRSAVAAASRPAEKGGGALRPFSSMEASQAALPVTPQPRPALTPGHPDPPPQAQLQQPLVSESRVAEVRELLVNFQPRPQPPLRPQYRGSVAPREGSPYAPIAAAPVPASEPQSAAQDSDHVAAGYFSSLGVIGQFNASYILCQRGTDLILIDQHAAHERVAFEKLKGQFAGREVDSQGLLFPETMEFSFRESAVLREHQAELARLGFEFEEFGGNTWLLKGVPQVLSATRYVDTIRDILEELGSLSRSRAFSDIQEDLLARIACHSVVRGKRTLSPVEIAALFKQMDETDFSSNCPHGRPVMQTLTLAEVEKMFKRI.

Disordered regions lie at residues 358–392 (EASQ…QPLV) and 408–448 (QPRP…QSAA). Pro residues predominate over residues 367–384 (TPQPRPALTPGHPDPPPQ). The span at 430–444 (PYAPIAAAPVPASEP) shows a compositional bias: low complexity.

The protein belongs to the DNA mismatch repair MutL/HexB family.

Functionally, this protein is involved in the repair of mismatches in DNA. It is required for dam-dependent methyl-directed DNA mismatch repair. May act as a 'molecular matchmaker', a protein that promotes the formation of a stable complex between two or more DNA-binding proteins in an ATP-dependent manner without itself being part of a final effector complex. This is DNA mismatch repair protein MutL from Geobacter sp. (strain M21).